The chain runs to 481 residues: Aspartyl/glutamyl-tRNA(Asn/Gln) amidotransferase subunit B (481 aa).

The protein belongs to the GatB/GatE family. GatB subfamily. As to quaternary structure, heterotrimer of A, B and C subunits.

It catalyses the reaction L-glutamyl-tRNA(Gln) + L-glutamine + ATP + H2O = L-glutaminyl-tRNA(Gln) + L-glutamate + ADP + phosphate + H(+). The enzyme catalyses L-aspartyl-tRNA(Asn) + L-glutamine + ATP + H2O = L-asparaginyl-tRNA(Asn) + L-glutamate + ADP + phosphate + 2 H(+). Allows the formation of correctly charged Asn-tRNA(Asn) or Gln-tRNA(Gln) through the transamidation of misacylated Asp-tRNA(Asn) or Glu-tRNA(Gln) in organisms which lack either or both of asparaginyl-tRNA or glutaminyl-tRNA synthetases. The reaction takes place in the presence of glutamine and ATP through an activated phospho-Asp-tRNA(Asn) or phospho-Glu-tRNA(Gln). The protein is Aspartyl/glutamyl-tRNA(Asn/Gln) amidotransferase subunit B of Fusobacterium nucleatum subsp. nucleatum (strain ATCC 25586 / DSM 15643 / BCRC 10681 / CIP 101130 / JCM 8532 / KCTC 2640 / LMG 13131 / VPI 4355).